The sequence spans 184 residues: Cathelicidin-related peptide Pt_CRAMP1 (184 aa).

The first 22 residues, 1–22 (MEGFFWKTWLVVAAFAIGGTSS), serve as a signal peptide directing secretion. Residues 23–150 (LPHKPLTYEE…EDEKDQPRRV (128 aa)) constitute a propeptide that is removed on maturation. 2 disulfides stabilise this stretch: Cys81-Cys92 and Cys103-Cys120. A compositionally biased stretch (acidic residues) spans 125 to 144 (EDEEQNQEEEEEEEKEEDEK). The disordered stretch occupies residues 125–147 (EDEEQNQEEEEEEEKEEDEKDQP).

Belongs to the cathelicidin family. Expressed by the venom gland.

The protein localises to the secreted. The protein resides in the target cell membrane. Its function is as follows. Potent antimicrobial peptide against Gram-negative (MIC=2 ug/ml against E.coli ATCC 25922, MIC=8 ug/ml against P.aeruginosa) and Gram-positive bacteria (MIC=32 ug/ml against E.faecalis, MIC=32 ug/ml against S.aureus). Adopts an amphipathic alpha helical conformation, that may allow to partition into the target membrane. High hemolytic activities have been observed on mammalian cells. In Pseudonaja textilis (Eastern brown snake), this protein is Cathelicidin-related peptide Pt_CRAMP1.